The primary structure comprises 288 residues: Syntaxin-1A (288 aa).

A compositionally biased stretch (basic and acidic residues) spans 1 to 13; the sequence is MKDRTQELRTAKD. The tract at residues 1–20 is disordered; the sequence is MKDRTQELRTAKDSDDDDDV. Topologically, residues 1–265 are cytoplasmic; the sequence is MKDRTQELRT…KYQSKARRKK (265 aa). 3 positions are modified to phosphoserine: S14, S64, and S95. Residues 68 to 109 are a coiled coil; the sequence is DEKTKEELEELMSDIKKTANKVRSKLKSIEQSIEQEEGLNRS. Position 188 is a phosphoserine; by DAPK1 (S188). Residues 192-254 enclose the t-SNARE coiled-coil homology domain; sequence LSEIETRHSE…ERAVSDTKKA (63 aa). Residues K252, K253, and K256 each participate in a glycyl lysine isopeptide (Lys-Gly) (interchain with G-Cter in SUMO) cross-link. A helical; Anchor for type IV membrane protein membrane pass occupies residues 266–286; sequence IMIIICCVILGIIIASTIGGI. At 287-288 the chain is on the extracellular side; sequence FG.

It belongs to the syntaxin family. Part of the SNARE core complex containing SNAP25, VAMP2 and STX1A; this complex constitutes the basic catalytic machinery of the complex neurotransmitter release apparatus. The SNARE complex interacts with CPLX1. Interacts with STXBP1. The interaction with STXBP1 promotes assembly of the SNARE complex. Interacts (via C-terminus) with KCNB1 (via C-terminus); the interaction increases in a calcium-dependent manner and induces a pore-independent enhancement of exocytosis in neuroendocrine cells, chromaffin cells, pancreatic beta cells and from the soma of dorsal root ganglia (DRG) neurons. Interacts with SYTL4. Interacts with STXBP6. Interacts with PLCL1 (via C2 domain). Interacts with OTOF. Interacts with LGI3. Interacts (via the H3 domain) with SLC6A4 (via the N-terminus); this interaction regulates SLC4A6 channel conductance in thalamocortical neurons. Interacts with SYT6 and SYT8; the interaction is Ca(2+)-dependent. Interacts with VAMP8. Interacts with SNAP23. Interacts with VAPA and SYBU. Interacts with PRRT2. Interacts with SEPT8. Interacts with STXBP5L. Interacts with synaptotagmin-1/SYT1. Interacts with SEPTIN5; in the cerebellar cortex. Interacts with SEPTIN4; in the striatum. Post-translationally, phosphorylated by CK2. Phosphorylation at Ser-188 by DAPK1 significantly decreases its interaction with STXBP1. In terms of processing, phosphorylated by CK2. Phosphorylation at Ser-188 by DAPK1 significantly decreases its interaction with STXBP1. Sumoylated, sumoylation is required for regulation of synaptic vesicle endocytosis. Expressed in the striatum (at protein level). Expressed in the ileum.

It is found in the cytoplasmic vesicle. The protein resides in the secretory vesicle. The protein localises to the synaptic vesicle membrane. It localises to the synapse. Its subcellular location is the synaptosome. It is found in the cell membrane. Plays an essential role in hormone and neurotransmitter calcium-dependent exocytosis and endocytosis. Part of the SNARE (Soluble NSF Attachment Receptor) complex composed of SNAP25, STX1A and VAMP2 which mediates the fusion of synaptic vesicles with the presynaptic plasma membrane. STX1A and SNAP25 are localized on the plasma membrane while VAMP2 resides in synaptic vesicles. The pairing of the three SNAREs from the N-terminal SNARE motifs to the C-terminal anchors leads to the formation of the SNARE complex, which brings membranes into close proximity and results in final fusion. Participates in the calcium-dependent regulation of acrosomal exocytosis in sperm. Also plays an important role in the exocytosis of hormones such as insulin or glucagon-like peptide 1 (GLP-1). The polypeptide is Syntaxin-1A (Stx1a) (Mus musculus (Mouse)).